The following is a 304-amino-acid chain: Acetyl-coenzyme A carboxylase carboxyl transferase subunit beta (304 aa).

A CoA carboxyltransferase N-terminal domain is found at 25–294 (VWTKCDSCGQ…PSVVESKADT (270 aa)). The Zn(2+) site is built by Cys-29, Cys-32, Cys-48, and Cys-51. Residues 29–51 (CDSCGQVLYRAELERNLEVCPKC) form a C4-type zinc finger.

This sequence belongs to the AccD/PCCB family. In terms of assembly, acetyl-CoA carboxylase is a heterohexamer composed of biotin carboxyl carrier protein (AccB), biotin carboxylase (AccC) and two subunits each of ACCase subunit alpha (AccA) and ACCase subunit beta (AccD). The cofactor is Zn(2+).

Its subcellular location is the cytoplasm. The catalysed reaction is N(6)-carboxybiotinyl-L-lysyl-[protein] + acetyl-CoA = N(6)-biotinyl-L-lysyl-[protein] + malonyl-CoA. It participates in lipid metabolism; malonyl-CoA biosynthesis; malonyl-CoA from acetyl-CoA: step 1/1. In terms of biological role, component of the acetyl coenzyme A carboxylase (ACC) complex. Biotin carboxylase (BC) catalyzes the carboxylation of biotin on its carrier protein (BCCP) and then the CO(2) group is transferred by the transcarboxylase to acetyl-CoA to form malonyl-CoA. This chain is Acetyl-coenzyme A carboxylase carboxyl transferase subunit beta, found in Yersinia pestis bv. Antiqua (strain Nepal516).